The primary structure comprises 367 residues: Putative C-&gt;U-editing enzyme APOBEC-4 (367 aa).

The 117-residue stretch at 61–177 (PQTKHLTFYE…AWNREALRSL (117 aa)) folds into the CMP/dCMP-type deaminase domain. H93 is a Zn(2+) binding site. The active-site Proton donor is the E95. Residues C127 and C134 each coordinate Zn(2+).

Belongs to the cytidine and deoxycytidylate deaminase family. The cofactor is Zn(2+). Predominantly expressed in testis.

Its function is as follows. Putative C to U editing enzyme whose physiological substrate is not yet known. This chain is Putative C-&gt;U-editing enzyme APOBEC-4 (APOBEC4), found in Homo sapiens (Human).